Reading from the N-terminus, the 476-residue chain is Serine/threonine-protein kinase sax-1 (476 aa).

A Protein kinase domain is found at 87-381; it reads FESLKVIGRG…LDEIKQCPFV (295 aa). ATP-binding positions include 93–101 and Lys-116; that span reads IGRGAFGEV. Asp-210 serves as the catalytic Proton acceptor. The AGC-kinase C-terminal domain maps to 382 to 452; it reads KRIDWNHIRE…KRFDGLTQKM (71 aa).

The protein belongs to the protein kinase superfamily. AGC Ser/Thr protein kinase family. Requires Mg(2+) as cofactor. As to expression, widely expressed in embryonic and larval neurons that contribute axons to the nerve ring and in hypodermal cells, including lateral seam cells. Also displays a punctate localization in muscle.

The protein localises to the cytoplasm. Its subcellular location is the nucleus. The catalysed reaction is L-seryl-[protein] + ATP = O-phospho-L-seryl-[protein] + ADP + H(+). The enzyme catalyses L-threonyl-[protein] + ATP = O-phospho-L-threonyl-[protein] + ADP + H(+). In terms of biological role, acts with sax-2 to restrict the growth of both primary and secondary neurites. Regulates mechanosensory tiling by controlling the termination point of sensory dendrites. This Caenorhabditis elegans protein is Serine/threonine-protein kinase sax-1.